The sequence spans 421 residues: Phosphatidylinositol 5-phosphate 4-kinase type-2 gamma (421 aa).

Ala-2 carries the N-acetylalanine modification. Ser-26 is subject to Phosphoserine. Residues 43 to 420 (AADPLVGVFL…RFLDFITNIF (378 aa)) form the PIPK domain. The tract at residues 69-75 (VMLLPDD) is required for interaction with PIP5K1A. Ser-349 carries the post-translational modification Phosphoserine.

Interacts with PIP5K1A; the interaction inhibits PIP5K1A kinase activity. In terms of processing, phosphorylated, phosphorylation is induced by EGF.

It localises to the endoplasmic reticulum. Its subcellular location is the cytoplasm. The enzyme catalyses a 1,2-diacyl-sn-glycero-3-phospho-(1D-myo-inositol-5-phosphate) + ATP = a 1,2-diacyl-sn-glycero-3-phospho-(1D-myo-inositol-4,5-bisphosphate) + ADP + H(+). It carries out the reaction 1,2-dihexadecanoyl-sn-glycero-3-phospho-(1D-myo-inositol-5-phosphate) + ATP = 1,2-dihexadecanoyl-sn-glycero-3-phospho-(1D-myo-inositol-4,5-bisphosphate) + ADP + H(+). The catalysed reaction is 1,2-dihexadecanoyl-sn-glycero-3-phospho-(1D-myo-inositol-5-phosphate) + GTP = 1,2-dihexadecanoyl-sn-glycero-3-phospho-(1D-myo-inositol-4,5-bisphosphate) + GDP + H(+). Functionally, phosphatidylinositol 5-phosphate 4-kinase with low enzymatic activity. May be a GTP sensor, has higher GTP-dependent kinase activity than ATP-dependent kinase activity. PIP4Ks negatively regulate insulin signaling through a catalytic-independent mechanism. They interact with PIP5Ks and suppress PIP5K-mediated PtdIns(4,5)P2 synthesis and insulin-dependent conversion to PtdIns(3,4,5)P3. The chain is Phosphatidylinositol 5-phosphate 4-kinase type-2 gamma (PIP4K2C) from Pongo abelii (Sumatran orangutan).